The primary structure comprises 288 residues: Ankyrin repeat and SOCS box protein 8 (288 aa).

Ser17 carries the phosphoserine modification. ANK repeat units follow at residues 52–81 (GTLKPLHCACMVSDADCVELLLEKGAEVNA), 85–113 (YNRTALHYAAEKDEACVEVLLEYGANPNA), 117–146 (NRDTPLHWAAFKNNAECVRALLESGASVNA), and 150–179 (NNDTPLSWAAMKGNLESVSILLDYGAEVRV). Residues 235-288 (QLCEKLTVLCSAPGTLKTLSRYAVRRSLGLQYLPDAVKGLPLPASLKEYLLLIE) enclose the SOCS box domain.

This sequence belongs to the ankyrin SOCS box (ASB) family. In terms of assembly, interacts with TBK1; this interaction promotes TBK1 proteasomal degradation. Post-translationally, phosphorylated by TBK1.

The protein localises to the cytoplasm. The protein operates within protein modification; protein ubiquitination. Its function is as follows. May be a substrate-recognition component of a SCF-like ECS (Elongin-Cullin-SOCS-box protein) E3 ubiquitin-protein ligase complex which mediates the ubiquitination and subsequent proteasomal degradation of target proteins. Inhibits IFN-beta production through the IRF3 signaling pathway by targeting TBK1 via 'Lys-48'-linked ubiquitination, leading to its proteasomal degradation. The polypeptide is Ankyrin repeat and SOCS box protein 8 (ASB8) (Bos taurus (Bovine)).